The chain runs to 110 residues: Large ribosomal subunit protein uL22 (110 aa).

Belongs to the universal ribosomal protein uL22 family. As to quaternary structure, part of the 50S ribosomal subunit.

Its function is as follows. This protein binds specifically to 23S rRNA; its binding is stimulated by other ribosomal proteins, e.g. L4, L17, and L20. It is important during the early stages of 50S assembly. It makes multiple contacts with different domains of the 23S rRNA in the assembled 50S subunit and ribosome. The globular domain of the protein is located near the polypeptide exit tunnel on the outside of the subunit, while an extended beta-hairpin is found that lines the wall of the exit tunnel in the center of the 70S ribosome. This Syntrophotalea carbinolica (strain DSM 2380 / NBRC 103641 / GraBd1) (Pelobacter carbinolicus) protein is Large ribosomal subunit protein uL22.